The chain runs to 456 residues: MTTLVPASLFLLLWTLPGKVLLSVALAKEDVKSGLKGSQPMSPSDFLDKLMGRTSGYDARIRPNFKGPPVNVTCNIFINSFGSVTETTMDYRVNVFLRQQWNDPRLAYREYPDDSLDLDPSMLDSIWKPDLFFANEKGANFHEVTTDNKLLRIFKNGNVLYSIRLTLILSCPMDLKNFPMDIQTCTMQLESFGYTMNDLMFEWLEDAPAVQVAEGLTLPQFILRDEKDLGYCTKHYNTGKFTCIEVKFHLERQMGYYLIQMYIPSLLIVILSWVSFWINMDAAPARVGLGITTVLTMTTQSSGSRASLPKVSYVKAIDIWMAVCLLFVFAALLEYAAVNFVSRQHKEFMRLRRRQRRQRMEEDIIRESRFYFRGYGLGHCLQARDGGPMEGSSIYSPQPPTPLLKEGETMRKLYVDRAKRIDTISRAVFPFTFLVFNIFYWVVYKVLRSEDIHQAL.

The signal sequence occupies residues 1-27 (MTTLVPASLFLLLWTLPGKVLLSVALA). The Extracellular portion of the chain corresponds to 28–256 (KEDVKSGLKG…KFHLERQMGY (229 aa)). Asn-71 carries N-linked (GlcNAc...) asparagine glycosylation. Intrachain disulfides connect Cys-171/Cys-185 and Cys-232/Cys-243. 236–241 (YNTGKF) provides a ligand contact to strychnine. The chain crosses the membrane as a helical span at residues 257-278 (YLIQMYIPSLLIVILSWVSFWI). The Cytoplasmic portion of the chain corresponds to 279–283 (NMDAA). The chain crosses the membrane as a helical span at residues 284-304 (PARVGLGITTVLTMTTQSSGS). Residues 305–315 (RASLPKVSYVK) lie on the Extracellular side of the membrane. The chain crosses the membrane as a helical span at residues 316-336 (AIDIWMAVCLLFVFAALLEYA). At 337–423 (AVNFVSRQHK…YVDRAKRIDT (87 aa)) the chain is on the cytoplasmic side. The chain crosses the membrane as a helical span at residues 424 to 444 (ISRAVFPFTFLVFNIFYWVVY). Residues 445-456 (KVLRSEDIHQAL) are Extracellular-facing.

It belongs to the ligand-gated ion channel (TC 1.A.9) family. Glycine receptor (TC 1.A.9.3) subfamily. GLRA4 sub-subfamily. As to quaternary structure, homopentamer (in vitro). Heteropentamer composed of GLRA4 and GLRB. As to expression, detected in the retina inner plexiform layer, especially at the border between layer three and four (at protein level).

It is found in the postsynaptic cell membrane. The protein localises to the synapse. Its subcellular location is the perikaryon. The protein resides in the cell projection. It localises to the dendrite. It is found in the cell membrane. The enzyme catalyses chloride(in) = chloride(out). Inhibited by strychnine. Its function is as follows. Glycine receptors are ligand-gated chloride channels. Channel opening is triggered by extracellular glycine. Channel opening is also triggered by taurine and beta-alanine. Plays a role in the down-regulation of neuronal excitability. Contributes to the generation of inhibitory postsynaptic currents. The sequence is that of Glycine receptor subunit alpha-4 (Glra4) from Mus musculus (Mouse).